The following is a 260-amino-acid chain: Indole-3-glycerol phosphate synthase (260 aa).

It belongs to the TrpC family.

It catalyses the reaction 1-(2-carboxyphenylamino)-1-deoxy-D-ribulose 5-phosphate + H(+) = (1S,2R)-1-C-(indol-3-yl)glycerol 3-phosphate + CO2 + H2O. It functions in the pathway amino-acid biosynthesis; L-tryptophan biosynthesis; L-tryptophan from chorismate: step 4/5. This Staphylococcus haemolyticus (strain JCSC1435) protein is Indole-3-glycerol phosphate synthase.